Consider the following 189-residue polypeptide: Elongation factor P (189 aa).

The protein belongs to the elongation factor P family.

It is found in the cytoplasm. The protein operates within protein biosynthesis; polypeptide chain elongation. In terms of biological role, involved in peptide bond synthesis. Stimulates efficient translation and peptide-bond synthesis on native or reconstituted 70S ribosomes in vitro. Probably functions indirectly by altering the affinity of the ribosome for aminoacyl-tRNA, thus increasing their reactivity as acceptors for peptidyl transferase. The protein is Elongation factor P of Chloroflexus aggregans (strain MD-66 / DSM 9485).